Here is a 704-residue protein sequence, read N- to C-terminus: Protein arginine N-methyltransferase 7 (704 aa).

SAM-dependent MTase PRMT-type domains follow at residues E14–W356 and S366–E704.

Belongs to the class I-like SAM-binding methyltransferase superfamily. Protein arginine N-methyltransferase family. PRMT7 subfamily.

Functionally, essential arginine methyltransferase that can both catalyze the formation of omega-N monomethylarginine (MMA) and symmetrical dimethylarginine (sDMA). Specifically mediates the symmetrical dimethylation of arginine residues in the small nuclear ribonucleoproteins SmD1 and SmD3. This Drosophila grimshawi (Hawaiian fruit fly) protein is Protein arginine N-methyltransferase 7 (Art7).